The sequence spans 222 residues: Adenylate kinase (222 aa).

G10–T15 serves as a coordination point for ATP. Positions S30–V59 are NMP. Residues T31, R36, G57–V59, G85–R88, and Q92 contribute to the AMP site. Positions G122–D159 are LID. Residues R123 and T132–Y133 contribute to the ATP site. The segment at V135–E162 is disordered. AMP is bound by residues R156 and R167. G207 provides a ligand contact to ATP.

This sequence belongs to the adenylate kinase family. Monomer.

The protein localises to the cytoplasm. The enzyme catalyses AMP + ATP = 2 ADP. It participates in purine metabolism; AMP biosynthesis via salvage pathway; AMP from ADP: step 1/1. Its function is as follows. Catalyzes the reversible transfer of the terminal phosphate group between ATP and AMP. Plays an important role in cellular energy homeostasis and in adenine nucleotide metabolism. This is Adenylate kinase from Ralstonia nicotianae (strain ATCC BAA-1114 / GMI1000) (Ralstonia solanacearum).